Reading from the N-terminus, the 361-residue chain is Tetrathionate reductase subunit C (361 aa).

9 helical membrane-spanning segments follow: residues 26–46 (FSYALLISGADLLLLAALALL), 53–73 (AIPMFLILGLSFFSVILLGPL), 104–124 (ALYGGLLWPLTFIVALIFALL), 160–180 (LAAILVPLSALWTIYPGMLFF), 193–213 (LMLPMFFGETFITATGTALIL), 233–253 (GAAAIALAGVLILQMFIWGMW), 258–278 (FAAVVPMMQAAAVIFLLTFIL), 288–308 (ITPIVPVLALFGVVVNKWNLI), and 334–354 (AVSPIALAILLLVILSYIFPM).

Belongs to the NrfD family. In terms of assembly, probably composed of three subunits: TtrA, TtrB and TtrC.

The protein resides in the cell membrane. Functionally, part of a membrane-bound tetrathionate reductase that catalyzes the reduction of tetrathionate to thiosulfate. TtrC probably anchors TtrA and TtrB to the external face of the cytoplasmic membrane. May transfer electrons from membrane quinol to TtrB. This chain is Tetrathionate reductase subunit C (ttrC), found in Archaeoglobus fulgidus (strain ATCC 49558 / DSM 4304 / JCM 9628 / NBRC 100126 / VC-16).